The following is a 467-amino-acid chain: Transcription factor CRF1 (467 aa).

A compositionally biased stretch (polar residues) spans 1-10 (MLLSAPVNST). Disordered regions lie at residues 1–42 (MLLS…VVLS), 62–110 (DFES…SSKT), 151–170 (SKSE…TNED), and 341–361 (TYRD…DRKR). Basic residues predominate over residues 11–23 (VRRKPHSPNKKKP). A compositionally biased stretch (low complexity) spans 28 to 42 (TAASFSSSSSTVVLS). Over residues 89 to 102 (YSREENTNEVEEKT) the composition is skewed to basic and acidic residues.

Interacts with FHL1 to form a repressor complex. The formation of the CRF1-FHL1 complex is inhibited by the TOR pathway. In terms of processing, phosphorylated by CDC28 and YAK1.

The protein resides in the cytoplasm. It is found in the nucleus. Functionally, transcription factor, corepressor with FHL1 of ribosomal protein genes. May be involved in the blocking of the spread of silencing. In Saccharomyces cerevisiae (strain ATCC 204508 / S288c) (Baker's yeast), this protein is Transcription factor CRF1 (CRF1).